The following is a 489-amino-acid chain: Adenosylhomocysteinase (489 aa).

Substrate is bound by residues Thr68, Asp151, and Glu213. 214-216 (TTT) is a binding site for NAD(+). Residues Lys243 and Asp247 each coordinate substrate. Residues Asn248, 277-282 (GYGDVG), Glu300, Asn335, 356-358 (IGH), and Asn403 contribute to the NAD(+) site.

It belongs to the adenosylhomocysteinase family. NAD(+) serves as cofactor.

Its subcellular location is the cytoplasm. The enzyme catalyses S-adenosyl-L-homocysteine + H2O = L-homocysteine + adenosine. It functions in the pathway amino-acid biosynthesis; L-homocysteine biosynthesis; L-homocysteine from S-adenosyl-L-homocysteine: step 1/1. May play a key role in the regulation of the intracellular concentration of adenosylhomocysteine. The chain is Adenosylhomocysteinase from Mycobacterium sp. (strain KMS).